The sequence spans 23 residues: Thylakoid lumenal 17.4 kDa protein (23 aa).

The disordered stretch occupies residues 1-23 (ANQRLPPLSNDPDRCERAFVGNT).

Its subcellular location is the plastid. It is found in the chloroplast thylakoid lumen. The protein is Thylakoid lumenal 17.4 kDa protein of Spinacia oleracea (Spinach).